The primary structure comprises 88 residues: Small ribosomal subunit protein uS15 (88 aa).

This sequence belongs to the universal ribosomal protein uS15 family. Part of the 30S ribosomal subunit. Forms a bridge to the 50S subunit in the 70S ribosome, contacting the 23S rRNA.

In terms of biological role, one of the primary rRNA binding proteins, it binds directly to 16S rRNA where it helps nucleate assembly of the platform of the 30S subunit by binding and bridging several RNA helices of the 16S rRNA. Forms an intersubunit bridge (bridge B4) with the 23S rRNA of the 50S subunit in the ribosome. This Mycoplasma mobile (strain ATCC 43663 / 163K / NCTC 11711) (Mesomycoplasma mobile) protein is Small ribosomal subunit protein uS15.